The sequence spans 330 residues: Quinone oxidoreductase (330 aa).

Alanine 2 carries the post-translational modification N-acetylalanine. At lysine 23 the chain carries N6-acetyllysine. NADP(+) contacts are provided by residues tyrosine 53, 158 to 161, glycine 181, histidine 200, asparagine 229, 246 to 249, and 269 to 271; these read SGGV, VGSK, and VTL. Serine 248 is modified (phosphoserine).

This sequence belongs to the zinc-containing alcohol dehydrogenase family. Quinone oxidoreductase subfamily. In terms of assembly, homotetramer.

The protein resides in the cytoplasm. The catalysed reaction is 2 a quinone + NADPH + H(+) = 2 a 1,4-benzosemiquinone + NADP(+). Functionally, does not have alcohol dehydrogenase activity. Binds NADP and acts through a one-electron transfer process. Orthoquinones, such as 1,2-naphthoquinone or 9,10-phenanthrenequinone, are the best substrates (in vitro). May act in the detoxification of xenobiotics. Interacts with (AU)-rich elements (ARE) in the 3'-UTR of target mRNA species and enhances their stability. NADPH binding interferes with mRNA binding. This is Quinone oxidoreductase (CRYZ) from Lama guanicoe (Guanaco).